The sequence spans 619 residues: DNA mismatch repair protein MutL (619 aa).

Basic and acidic residues predominate over residues 368–378; sequence VDEPKQVDEPK. The interval 368–403 is disordered; that stretch reads VDEPKQVDEPKQSSPVQEPKEEIPSFLPTVESKQND.

Belongs to the DNA mismatch repair MutL/HexB family.

This protein is involved in the repair of mismatches in DNA. It is required for dam-dependent methyl-directed DNA mismatch repair. May act as a 'molecular matchmaker', a protein that promotes the formation of a stable complex between two or more DNA-binding proteins in an ATP-dependent manner without itself being part of a final effector complex. This Geobacillus sp. (strain WCH70) protein is DNA mismatch repair protein MutL.